The chain runs to 58 residues: Succinate dehydrogenase subunit 8A, mitochondrial (58 aa).

In terms of assembly, component of complex II composed of eight subunits in plants: four classical SDH subunits SDH1, SDH2, SDH3 and SDH4 (a flavoprotein (FP), an iron-sulfur protein (IP), and a cytochrome b composed of a large and a small subunit.), as well as four subunits unknown in mitochondria from bacteria and heterotrophic eukaryotes.

It localises to the mitochondrion inner membrane. It participates in carbohydrate metabolism; tricarboxylic acid cycle. In Oryza sativa subsp. japonica (Rice), this protein is Succinate dehydrogenase subunit 8A, mitochondrial.